The primary structure comprises 962 residues: Atromentin synthetase nps3 (962 aa).

The adenylation (A) domain stretch occupies residues 55–469 (FISSSAHDSS…SGRIKDTVIV (415 aa)). The 79-residue stretch at 601–679 (VPATITETAF…DLAKYIDALV (79 aa)) folds into the Carrier domain. Residues 606 to 676 (TETAFAKIFA…VLRDLAKYID (71 aa)) are thiolation and peptide carrier (T) domain. Ser-638 bears the O-(pantetheine 4'-phosphoryl)serine mark. Positions 702-805 (PIFFVHPGVG…VGLINIPPHI (104 aa)) are thioesterase (TE) domain.

It belongs to the ATP-dependent AMP-binding enzyme family.

It functions in the pathway secondary metabolite biosynthesis. Its function is as follows. An L-tyrosine:2-oxoglutarate aminotransferase (probably amt1) and atromentin synthetase nps3 catalyze consecutive steps to turn over L-tyrosine into atromentin, which represents the generic precursor molecule for the entire terphenylquinone and pulvinic acid family of pigments, which are widely distributed secondary metabolites in homobasidiomycetes. The first step catalyzed by the aminotransferase converts L-tyrosine in to 4-hydroxyphenylpyruvate (4-HPP). Adenylation of two 4-HPP monomers by the nps3 adenylation (A) domain, covalent tethering of the monomers as a thioester and oxoester onto the nps3 thiolation (T) and thioesterase (TE) domains, respectively, and symmetric C-C-bond formation between two monomers catalyzed by the nps3 TE domain leads to atromentin. Follow-up products of atromentin in S.lacrymans include atromentic acid, xerocomic acid, isoxerocomic acid and variegatic acid. The polypeptide is Atromentin synthetase nps3 (nps3) (Serpula lacrymans var. lacrymans (strain S7.9) (Dry rot fungus)).